Reading from the N-terminus, the 116-residue chain is Large ribosomal subunit protein eL30 (116 aa).

The protein belongs to the eukaryotic ribosomal protein eL30 family. In terms of assembly, component of the large ribosomal subunit.

The protein resides in the cytoplasm. Its function is as follows. Component of the large ribosomal subunit. The ribosome is a large ribonucleoprotein complex responsible for the synthesis of proteins in the cell. This is Large ribosomal subunit protein eL30 (rpl30) from Ictalurus punctatus (Channel catfish).